Consider the following 283-residue polypeptide: D-alanine aminotransferase (283 aa).

Position 32 (Tyr32) interacts with substrate. Pyridoxal 5'-phosphate is bound at residue Arg51. Residues Arg99 and His101 each contribute to the substrate site. The active-site Proton acceptor is Lys146. Lys146 carries the N6-(pyridoxal phosphate)lysine modification. Glu178 is a binding site for pyridoxal 5'-phosphate.

Belongs to the class-IV pyridoxal-phosphate-dependent aminotransferase family. Homodimer. Pyridoxal 5'-phosphate is required as a cofactor.

The enzyme catalyses D-alanine + 2-oxoglutarate = D-glutamate + pyruvate. Its function is as follows. Acts on the D-isomers of alanine, leucine, aspartate, glutamate, aminobutyrate, norvaline and asparagine. The enzyme transfers an amino group from a substrate D-amino acid to the pyridoxal phosphate cofactor to form pyridoxamine and an alpha-keto acid in the first half-reaction. The second half-reaction is the reverse of the first, transferring the amino group from the pyridoxamine to a second alpha-keto acid to form the product D-amino acid via a ping-pong mechanism. This is an important process in the formation of D-alanine and D-glutamate, which are essential bacterial cell wall components. The protein is D-alanine aminotransferase (dat) of Lysinibacillus sphaericus (Bacillus sphaericus).